The primary structure comprises 72 residues: Translation initiation factor IF-1 2 (72 aa).

Residues 1 to 72 (MAKEDVIEMQ…TKGRIVFRTK (72 aa)) form the S1-like domain.

The protein belongs to the IF-1 family. As to quaternary structure, component of the 30S ribosomal translation pre-initiation complex which assembles on the 30S ribosome in the order IF-2 and IF-3, IF-1 and N-formylmethionyl-tRNA(fMet); mRNA recruitment can occur at any time during PIC assembly.

The protein resides in the cytoplasm. In terms of biological role, one of the essential components for the initiation of protein synthesis. Stabilizes the binding of IF-2 and IF-3 on the 30S subunit to which N-formylmethionyl-tRNA(fMet) subsequently binds. Helps modulate mRNA selection, yielding the 30S pre-initiation complex (PIC). Upon addition of the 50S ribosomal subunit IF-1, IF-2 and IF-3 are released leaving the mature 70S translation initiation complex. In Azoarcus sp. (strain BH72), this protein is Translation initiation factor IF-1 2.